A 473-amino-acid polypeptide reads, in one-letter code: Aspartyl aminopeptidase 1 (473 aa).

Residue His93 participates in Zn(2+) binding. Substrate is bound at residue His168. The Zn(2+) site is built by Asp262, Glu298, Glu299, and Asp343. Glu298 contributes to the substrate binding site. Substrate-binding residues include Asp343, His346, Lys371, and Tyr378. His437 contributes to the Zn(2+) binding site.

This sequence belongs to the peptidase M18 family. Tetrahedron-shaped homododecamer built from six homodimers. Interacts with autophagy receptor Nbr1. The cofactor is Zn(2+).

It localises to the cytoplasm. Its subcellular location is the vacuole lumen. It catalyses the reaction Release of an N-terminal aspartate or glutamate from a peptide, with a preference for aspartate.. Aspartyl aminopeptidase that is able to remove aspartyl residue at N-terminus of angiotensin I. Also acts as a chaperone and efficiently suppressed the thermal aggregation of citrate synthase. The chain is Aspartyl aminopeptidase 1 (ape4) from Schizosaccharomyces pombe (strain 972 / ATCC 24843) (Fission yeast).